Consider the following 132-residue polypeptide: Small ribosomal subunit protein uS8 (132 aa).

Belongs to the universal ribosomal protein uS8 family. In terms of assembly, part of the 30S ribosomal subunit. Contacts proteins S5 and S12.

In terms of biological role, one of the primary rRNA binding proteins, it binds directly to 16S rRNA central domain where it helps coordinate assembly of the platform of the 30S subunit. The polypeptide is Small ribosomal subunit protein uS8 (Flavobacterium johnsoniae (strain ATCC 17061 / DSM 2064 / JCM 8514 / BCRC 14874 / CCUG 350202 / NBRC 14942 / NCIMB 11054 / UW101) (Cytophaga johnsonae)).